A 487-amino-acid polypeptide reads, in one-letter code: GTPase Der (487 aa).

EngA-type G domains follow at residues 3–166 (PVIA…PRDA) and 193–366 (IKIA…KSAV). GTP-binding positions include 9–16 (GRPNVGKS), 56–60 (DTGGI), 118–121 (NKID), 199–206 (GRPNVGKS), 246–250 (DTAGV), and 311–314 (NKWD). A KH-like domain is found at 367–451 (TRWPTSRLTQ…PIRIEYKGGE (85 aa)). Residues 449 to 461 (GGENPFEGKKNTL) are compositionally biased toward basic and acidic residues. The disordered stretch occupies residues 449 to 487 (GGENPFEGKKNTLTDRQVNKKRRLMSHHKKAEKKRRDKR). Residues 467–487 (NKKRRLMSHHKKAEKKRRDKR) are compositionally biased toward basic residues.

Belongs to the TRAFAC class TrmE-Era-EngA-EngB-Septin-like GTPase superfamily. EngA (Der) GTPase family. As to quaternary structure, associates with the 50S ribosomal subunit.

Its function is as follows. GTPase that plays an essential role in the late steps of ribosome biogenesis. The polypeptide is GTPase Der (Pseudomonas putida (strain GB-1)).